The following is a 75-amino-acid chain: MKQIFIGIIRFYQKFISPMTPPTCRFYPTCSHYGLEAFQTHGALKGFWLTLKRILKCHPFHPGGFDPVPDKKDDK.

Belongs to the UPF0161 family.

It is found in the cell membrane. In terms of biological role, could be involved in insertion of integral membrane proteins into the membrane. This chain is Putative membrane protein insertion efficiency factor, found in Bacillus cytotoxicus (strain DSM 22905 / CIP 110041 / 391-98 / NVH 391-98).